Consider the following 143-residue polypeptide: Large ribosomal subunit protein uL11 (143 aa).

This sequence belongs to the universal ribosomal protein uL11 family. In terms of assembly, part of the ribosomal stalk of the 50S ribosomal subunit. Interacts with L10 and the large rRNA to form the base of the stalk. L10 forms an elongated spine to which L12 dimers bind in a sequential fashion forming a multimeric L10(L12)X complex. In terms of processing, one or more lysine residues are methylated.

In terms of biological role, forms part of the ribosomal stalk which helps the ribosome interact with GTP-bound translation factors. The sequence is that of Large ribosomal subunit protein uL11 from Janthinobacterium sp. (strain Marseille) (Minibacterium massiliensis).